Reading from the N-terminus, the 481-residue chain is Transmembrane protein 39A (481 aa).

8 helical membrane passes run 74-94 (LFET…YINI), 109-129 (STSL…AVML), 150-170 (LCYV…GWVL), 182-202 (SVLK…LCCL), 278-298 (EVLF…LCFV), 313-333 (LIMV…PPHY), 411-431 (LLNV…YSLL), and 437-457 (NHTL…FKLL).

This sequence belongs to the TMEM39 family.

The protein localises to the endoplasmic reticulum membrane. Its function is as follows. Regulates autophagy by controlling the spatial distribution and levels of the intracellular phosphatidylinositol 4-phosphate (PtdIns(4)P) pools. Modulates (PtdIns(4)P) levels by regulating the ER-to-Golgi trafficking of the phosphatidylinositide phosphatase SACM1L. This Danio rerio (Zebrafish) protein is Transmembrane protein 39A (tmem39a).